The primary structure comprises 118 residues: Large ribosomal subunit protein uL24 (118 aa).

Belongs to the universal ribosomal protein uL24 family. In terms of assembly, part of the 50S ribosomal subunit.

One of two assembly initiator proteins, it binds directly to the 5'-end of the 23S rRNA, where it nucleates assembly of the 50S subunit. Its function is as follows. One of the proteins that surrounds the polypeptide exit tunnel on the outside of the subunit. This Prochlorococcus marinus (strain SARG / CCMP1375 / SS120) protein is Large ribosomal subunit protein uL24.